The primary structure comprises 292 residues: Phosphatidylserine decarboxylase proenzyme (292 aa).

Catalysis depends on charge relay system; for autoendoproteolytic cleavage activity residues Asp89, His146, and Ser252. The active-site Schiff-base intermediate with substrate; via pyruvic acid; for decarboxylase activity is the Ser252. Ser252 bears the Pyruvic acid (Ser); by autocatalysis mark.

It belongs to the phosphatidylserine decarboxylase family. PSD-B subfamily. Prokaryotic type I sub-subfamily. As to quaternary structure, heterodimer of a large membrane-associated beta subunit and a small pyruvoyl-containing alpha subunit. Requires pyruvate as cofactor. Is synthesized initially as an inactive proenzyme. Formation of the active enzyme involves a self-maturation process in which the active site pyruvoyl group is generated from an internal serine residue via an autocatalytic post-translational modification. Two non-identical subunits are generated from the proenzyme in this reaction, and the pyruvate is formed at the N-terminus of the alpha chain, which is derived from the carboxyl end of the proenzyme. The autoendoproteolytic cleavage occurs by a canonical serine protease mechanism, in which the side chain hydroxyl group of the serine supplies its oxygen atom to form the C-terminus of the beta chain, while the remainder of the serine residue undergoes an oxidative deamination to produce ammonia and the pyruvoyl prosthetic group on the alpha chain. During this reaction, the Ser that is part of the protease active site of the proenzyme becomes the pyruvoyl prosthetic group, which constitutes an essential element of the active site of the mature decarboxylase.

The protein localises to the cell membrane. It carries out the reaction a 1,2-diacyl-sn-glycero-3-phospho-L-serine + H(+) = a 1,2-diacyl-sn-glycero-3-phosphoethanolamine + CO2. It participates in phospholipid metabolism; phosphatidylethanolamine biosynthesis; phosphatidylethanolamine from CDP-diacylglycerol: step 2/2. Its function is as follows. Catalyzes the formation of phosphatidylethanolamine (PtdEtn) from phosphatidylserine (PtdSer). In Shewanella sp. (strain MR-7), this protein is Phosphatidylserine decarboxylase proenzyme.